The chain runs to 52 residues: MPFRAALRKVPVELYPLGAAVATAVGFATYSMGKKLLADPNVHIDPTVRRTI.

The chain crosses the membrane as a helical span at residues 14–30 (LYPLGAAVATAVGFATY).

It belongs to the complex I NDUFA4 subunit family.

The protein resides in the mitochondrion inner membrane. In terms of biological role, accessory subunit of the mitochondrial membrane respiratory chain NADH dehydrogenase (Complex I), that is believed to be not involved in catalysis. Complex I functions in the transfer of electrons from NADH to the respiratory chain. The immediate electron acceptor for the enzyme is believed to be ubiquinone. This Schizosaccharomyces pombe (strain 972 / ATCC 24843) (Fission yeast) protein is NADH dehydrogenase [ubiquinone] 1 alpha subcomplex subunit 4 homolog.